The primary structure comprises 485 residues: Cysteine--tRNA ligase (485 aa).

Zn(2+) is bound at residue C28. The 'HIGH' region signature appears at 30–40 (MTVYDYCHLGH). Positions 212, 237, and 241 each coordinate Zn(2+). The 'KMSKS' region motif lies at 269–273 (KMSKS). K272 is a binding site for ATP.

This sequence belongs to the class-I aminoacyl-tRNA synthetase family. In terms of assembly, monomer. The cofactor is Zn(2+).

Its subcellular location is the cytoplasm. The enzyme catalyses tRNA(Cys) + L-cysteine + ATP = L-cysteinyl-tRNA(Cys) + AMP + diphosphate. This is Cysteine--tRNA ligase from Bordetella bronchiseptica (strain ATCC BAA-588 / NCTC 13252 / RB50) (Alcaligenes bronchisepticus).